The sequence spans 473 residues: Notchless protein homolog (473 aa).

The tract at residues G9–A91 is ubiquitin-like (UBL) domain. WD repeat units follow at residues G107–T146, G149–S188, G192–C236, G239–E277, E313–K354, G358–R399, G400–D439, and G442–G473. The DWD box signature appears at L417–R432.

It belongs to the NLE1/RSA4 family. As to quaternary structure, associates with the pre-60S ribosomal particle. In terms of tissue distribution, constitutively and ubiquitously expressed.

It is found in the nucleus. Its subcellular location is the nucleolus. Functionally, required for female gametophyte development. The chain is Notchless protein homolog from Arabidopsis thaliana (Mouse-ear cress).